We begin with the raw amino-acid sequence, 71 residues long: Small ribosomal subunit protein bS21 (71 aa).

This sequence belongs to the bacterial ribosomal protein bS21 family.

In Vesicomyosocius okutanii subsp. Calyptogena okutanii (strain HA), this protein is Small ribosomal subunit protein bS21.